An 848-amino-acid polypeptide reads, in one-letter code: Crooked neck-like protein 1 (848 aa).

Residue Thr-2 is modified to N-acetylalanine. The interval Arg-81–Ala-106 is disordered. HAT repeat units lie at residues Asp-222–Ser-254, Lys-256–Lys-288, Arg-290–Met-322, Gly-324–Arg-355, Lys-357–Lys-388, Ala-390–Asn-425, Lys-427–Lys-461, Ile-471–Ser-503, Ala-505–Asn-539, Lys-549–Arg-585, Lys-587–Gln-618, Arg-620–Ile-652, Gly-654–Glu-688, Glu-690–Ser-721, Gly-726–Thr-767, Ser-769–Pro-807, and Asp-809–Asp-834. The mediates interaction with HSP90 stretch occupies residues Met-411–Leu-628. Ser-503 carries the phosphoserine modification. The disordered stretch occupies residues Lys-827–Ser-848. The segment covering Gln-828 to Asp-840 has biased composition (basic and acidic residues).

The protein belongs to the crooked-neck family. As to quaternary structure, identified in the spliceosome C complex. Present in a spliceosome complex assembled in vitro containing CRNKL1, HPRP8BP and SNRPB2. Component of the minor spliceosome, which splices U12-type introns. Isoform 2 seems to be predominant in the spliceosome complex. Interacts with PPIL2 (via the PPIase cyclophilin-type domain); they may form a trimeric complex with HSP90. As to expression, widely expressed. Highly expressed in testis. Not detected in brain and lung.

It is found in the nucleus. The protein localises to the nucleus speckle. In terms of biological role, involved in pre-mRNA splicing process. As a component of the minor spliceosome, involved in the splicing of U12-type introns in pre-mRNAs. The sequence is that of Crooked neck-like protein 1 (CRNKL1) from Homo sapiens (Human).